The primary structure comprises 635 residues: Threonine--tRNA ligase (635 aa).

A TGS domain is found at 1–61 (MTVVRLPDGT…ETDSDLVLIT (61 aa)). Residues 242 to 533 (DHRKLGKQLD…LIEHHAGALP (292 aa)) are catalytic. Zn(2+)-binding residues include cysteine 333, histidine 384, and histidine 510.

It belongs to the class-II aminoacyl-tRNA synthetase family. In terms of assembly, homodimer. Zn(2+) is required as a cofactor.

Its subcellular location is the cytoplasm. The enzyme catalyses tRNA(Thr) + L-threonine + ATP = L-threonyl-tRNA(Thr) + AMP + diphosphate + H(+). Functionally, catalyzes the attachment of threonine to tRNA(Thr) in a two-step reaction: L-threonine is first activated by ATP to form Thr-AMP and then transferred to the acceptor end of tRNA(Thr). Also edits incorrectly charged L-seryl-tRNA(Thr). This Nitrosomonas europaea (strain ATCC 19718 / CIP 103999 / KCTC 2705 / NBRC 14298) protein is Threonine--tRNA ligase.